We begin with the raw amino-acid sequence, 330 residues long: DNA-directed RNA polymerase subunit alpha (330 aa).

An alpha N-terminal domain (alpha-NTD) region spans residues 1 to 229 (MKNLKFIKPF…DHFNVLVELS (229 aa)). The alpha C-terminal domain (alpha-CTD) stretch occupies residues 245-330 (AHNYVLDLEI…HSVEEDKDKH (86 aa)).

The protein belongs to the RNA polymerase alpha chain family. In terms of assembly, homodimer. The RNAP catalytic core consists of 2 alpha, 1 beta, 1 beta' and 1 omega subunit. When a sigma factor is associated with the core the holoenzyme is formed, which can initiate transcription.

The catalysed reaction is RNA(n) + a ribonucleoside 5'-triphosphate = RNA(n+1) + diphosphate. DNA-dependent RNA polymerase catalyzes the transcription of DNA into RNA using the four ribonucleoside triphosphates as substrates. In Aster yellows witches'-broom phytoplasma (strain AYWB), this protein is DNA-directed RNA polymerase subunit alpha.